A 438-amino-acid chain; its full sequence is Protein DAY-LENGTH-DEPENDENT DELAYED-GREENING 1, chloroplastic (438 aa).

A chloroplast-targeting transit peptide spans 1–54; the sequence is MSLMSSSMVLCHCLSFSSQNPDPESSSSSLLRYKPCDSISLWGKRRKKLWRFVP. 4 helical membrane-spanning segments follow: residues 216 to 236, 314 to 334, 359 to 379, and 398 to 418; these read FLAV…DYLL, AFAN…LLYA, AFLI…SGWE, and ITIF…LWLF.

It belongs to the CemA family.

It localises to the plastid. The protein resides in the chloroplast envelope. Its subcellular location is the chloroplast membrane. It carries out the reaction K(+)(in) + H(+)(out) = K(+)(out) + H(+)(in). The enzyme catalyses Ca(2+)(in) + H(+)(out) = Ca(2+)(out) + H(+)(in). Promotes K(+)/H(+) antiport activity supporting K(+) efflux to control H(+) homeostasis in chloroplasts. Also able to ensure Ca(2+)/H(+) antiport activity in vitro. Essential for chloroplast pH regulation and optimization of non-photochemical quenching (NPQ), a regulatory mechanism that dissipates excess light energy; acts downstream of PSBS but independently from PGR5 and FLAP1. In Arabidopsis thaliana (Mouse-ear cress), this protein is Protein DAY-LENGTH-DEPENDENT DELAYED-GREENING 1, chloroplastic.